The following is a 556-amino-acid chain: General transcription factor IIF subunit 1 (556 aa).

Disordered regions lie at residues 82-128 (TMTS…PAAA) and 226-499 (SRLQ…PFTE). Low complexity predominate over residues 84-128 (TSAPNGTNSTGTTPNTTTTTTTTTTTTTTTTTAAGTPGAPNPAAA). A compositionally biased stretch (basic and acidic residues) spans 245 to 275 (SGKKSIEELEEAEHRNRNEDPNRYKTTNEEK). Composition is skewed to acidic residues over residues 291 to 338 (GNGE…DVDL) and 378 to 394 (GDDEDDDEDDEDPDQDD). Basic and acidic residues-rich tracts occupy residues 415–427 (VKKEDDGGKDSKS) and 450–461 (NKSDSSVDNRES). The span at 469 to 492 (SSPQAVQPNSPSQQQQQQQQNIDP) shows a compositional bias: low complexity.

It belongs to the TFIIF alpha subunit family. In terms of assembly, heterodimer of an alpha and a beta subunit.

The protein resides in the nucleus. Its function is as follows. TFIIF is a general transcription initiation factor that binds to RNA polymerase II and helps to recruit it to the initiation complex in collaboration with TFIIB. It promotes transcription elongation. The sequence is that of General transcription factor IIF subunit 1 (gtf2f1) from Dictyostelium discoideum (Social amoeba).